A 261-amino-acid chain; its full sequence is NAD-capped RNA hydrolase NudC (261 aa).

Arg69 provides a ligand contact to substrate. Positions 98 and 101 each coordinate Zn(2+). Position 111 (Glu111) interacts with substrate. Positions 116 and 119 each coordinate Zn(2+). Tyr124 contributes to the substrate binding site. The Nudix hydrolase domain maps to 125–248; it reads PQIAPCIIVA…TVARRLIEDT (124 aa). Residues Ala158, Glu174, and Glu178 each contribute to the a divalent metal cation site. Residues 159-180 carry the Nudix box motif; it reads GFVEVGETLEQTVAREVMEESS. 192–199 lines the substrate pocket; that stretch reads QPWPFPQS. Glu219 serves as a coordination point for a divalent metal cation. Substrate is bound at residue Ala241.

It belongs to the Nudix hydrolase family. NudC subfamily. Homodimer. It depends on Mg(2+) as a cofactor. Mn(2+) serves as cofactor. Zn(2+) is required as a cofactor.

It catalyses the reaction a 5'-end NAD(+)-phospho-ribonucleoside in mRNA + H2O = a 5'-end phospho-adenosine-phospho-ribonucleoside in mRNA + beta-nicotinamide D-ribonucleotide + 2 H(+). It carries out the reaction NAD(+) + H2O = beta-nicotinamide D-ribonucleotide + AMP + 2 H(+). The enzyme catalyses NADH + H2O = reduced beta-nicotinamide D-ribonucleotide + AMP + 2 H(+). Its function is as follows. mRNA decapping enzyme that specifically removes the nicotinamide adenine dinucleotide (NAD) cap from a subset of mRNAs by hydrolyzing the diphosphate linkage to produce nicotinamide mononucleotide (NMN) and 5' monophosphate mRNA. The NAD-cap is present at the 5'-end of some mRNAs and stabilizes RNA against 5'-processing. Has preference for mRNAs with a 5'-end purine. Catalyzes the hydrolysis of a broad range of dinucleotide pyrophosphates. In Erwinia tasmaniensis (strain DSM 17950 / CFBP 7177 / CIP 109463 / NCPPB 4357 / Et1/99), this protein is NAD-capped RNA hydrolase NudC.